The following is a 577-amino-acid chain: Arginine--tRNA ligase (577 aa).

The 'HIGH' region motif lies at 124–132 (VAKEMHVGH).

Belongs to the class-I aminoacyl-tRNA synthetase family. Monomer.

It is found in the cytoplasm. It carries out the reaction tRNA(Arg) + L-arginine + ATP = L-arginyl-tRNA(Arg) + AMP + diphosphate. The chain is Arginine--tRNA ligase from Salmonella typhi.